The sequence spans 489 residues: Beta-1,3-glucosyltransferase (489 aa).

Met-1 is a topological domain (cytoplasmic). The chain crosses the membrane as a helical; Signal-anchor for type II membrane protein span at residues 2–22; the sequence is RPPALLALFSCSAAFALMSEE. Residues 23-489 lie on the Lumenal side of the membrane; the sequence is IKEKVTPSQD…ETQKDPREEL (467 aa). Asn-78 carries an N-linked (GlcNAc...) asparagine glycan. The Prevents secretion from ER signature appears at 486–489; that stretch reads REEL.

Belongs to the glycosyltransferase 31 family.

Its subcellular location is the endoplasmic reticulum membrane. Its pathway is protein modification; protein glycosylation. In terms of biological role, O-glucosyltransferase that transfers glucose toward fucose with a beta-1,3 linkage. Specifically glucosylates O-linked fucosylglycan on TSP type-1 domains of proteins, thereby contributing to elongation of O-fucosylglycan. The chain is Beta-1,3-glucosyltransferase from Mus musculus (Mouse).